The primary structure comprises 137 residues: L-ectoine synthase (137 aa).

Positions 115–137 (EVHDESGAYPADPELAREPVAAD) are disordered.

Belongs to the ectoine synthase family.

It carries out the reaction (2S)-4-acetamido-2-aminobutanoate = L-ectoine + H2O. It functions in the pathway amine and polyamine biosynthesis; ectoine biosynthesis; L-ectoine from L-aspartate 4-semialdehyde: step 3/3. Catalyzes the circularization of gamma-N-acetyl-alpha,gamma-diaminobutyric acid (ADABA) to ectoine (1,4,5,6-tetrahydro-2-methyl-4-pyrimidine carboxylic acid), which is an excellent osmoprotectant. This Sphingopyxis alaskensis (strain DSM 13593 / LMG 18877 / RB2256) (Sphingomonas alaskensis) protein is L-ectoine synthase.